Here is a 557-residue protein sequence, read N- to C-terminus: Probable asparagine synthetase [glutamine-hydrolyzing] (557 aa).

Catalysis depends on C2, which acts as the For GATase activity. Positions 2–188 constitute a Glutamine amidotransferase type-2 domain; sequence CGILAILNSL…PGHYFSSKTK (187 aa). L-glutamine-binding positions include 50–54, 75–77, and D101; these read RLAIV and NGE. The 250-residue stretch at 217 to 466 folds into the Asparagine synthetase domain; it reads AIKEAFEQAV…LPSSVLWRQK (250 aa). ATP contacts are provided by residues L239, I279, and 353–354; that span reads SG. Positions 538–557 are disordered; sequence WGASQDPSGRAQKVHLSTTE.

The enzyme catalyses L-aspartate + L-glutamine + ATP + H2O = L-asparagine + L-glutamate + AMP + diphosphate + H(+). The protein operates within amino-acid biosynthesis; L-asparagine biosynthesis; L-asparagine from L-aspartate (L-Gln route): step 1/1. The sequence is that of Probable asparagine synthetase [glutamine-hydrolyzing] (asns) from Dictyostelium discoideum (Social amoeba).